The sequence spans 930 residues: Protein translocase subunit SecA (930 aa).

Residues Q87, 105–109, and D515 each bind ATP; that span reads GEGKT. The Zn(2+) site is built by C914, C916, C925, and H926.

It belongs to the SecA family. Monomer and homodimer. Part of the essential Sec protein translocation apparatus which comprises SecA, SecYEG and auxiliary proteins SecDF-YajC and YidC. Requires Zn(2+) as cofactor.

Its subcellular location is the cell inner membrane. It is found in the cytoplasm. It catalyses the reaction ATP + H2O + cellular proteinSide 1 = ADP + phosphate + cellular proteinSide 2.. Its function is as follows. Part of the Sec protein translocase complex. Interacts with the SecYEG preprotein conducting channel. Has a central role in coupling the hydrolysis of ATP to the transfer of proteins into and across the cell membrane, serving both as a receptor for the preprotein-SecB complex and as an ATP-driven molecular motor driving the stepwise translocation of polypeptide chains across the membrane. This Burkholderia vietnamiensis (strain G4 / LMG 22486) (Burkholderia cepacia (strain R1808)) protein is Protein translocase subunit SecA.